Reading from the N-terminus, the 264-residue chain is DNA repair protein RecO (264 aa).

The protein belongs to the RecO family.

In terms of biological role, involved in DNA repair and RecF pathway recombination. The chain is DNA repair protein RecO from Prosthecochloris aestuarii (strain DSM 271 / SK 413).